Reading from the N-terminus, the 235-residue chain is Uridylate kinase (235 aa).

9–12 is a binding site for ATP; the sequence is KLSG. Position 51 (G51) interacts with UMP. ATP-binding residues include G52 and R56. Residues D71 and 132-139 each bind UMP; that span reads TGNPYFTT. Residues T159, Y165, and D168 each contribute to the ATP site.

It belongs to the UMP kinase family. As to quaternary structure, homohexamer.

It localises to the cytoplasm. It catalyses the reaction UMP + ATP = UDP + ADP. The protein operates within pyrimidine metabolism; CTP biosynthesis via de novo pathway; UDP from UMP (UMPK route): step 1/1. With respect to regulation, inhibited by UTP. Its function is as follows. Catalyzes the reversible phosphorylation of UMP to UDP. In Flavobacterium psychrophilum (strain ATCC 49511 / DSM 21280 / CIP 103535 / JIP02/86), this protein is Uridylate kinase.